The following is a 176-amino-acid chain: uncharacterized protein (176 aa).

This is an uncharacterized protein from Aquifex aeolicus (strain VF5).